The primary structure comprises 403 residues: tRNA(Met) cytidine acetate ligase (403 aa).

ATP-binding positions include 7-20 (IVEYNPFHNGHLYH), glycine 102, asparagine 168, and arginine 193.

This sequence belongs to the TmcAL family.

The protein localises to the cytoplasm. It carries out the reaction cytidine(34) in elongator tRNA(Met) + acetate + ATP = N(4)-acetylcytidine(34) in elongator tRNA(Met) + AMP + diphosphate. Catalyzes the formation of N(4)-acetylcytidine (ac(4)C) at the wobble position of elongator tRNA(Met), using acetate and ATP as substrates. First activates an acetate ion to form acetyladenylate (Ac-AMP) and then transfers the acetyl group to tRNA to form ac(4)C34. This chain is tRNA(Met) cytidine acetate ligase, found in Clostridium tetani (strain Massachusetts / E88).